The following is an 876-amino-acid chain: Alanine--tRNA ligase (876 aa).

Position 74 is an N6-acetyllysine (Lys74). Residues His564, His568, Cys666, and His670 each coordinate Zn(2+).

It belongs to the class-II aminoacyl-tRNA synthetase family. Homotetramer. Zn(2+) is required as a cofactor.

It is found in the cytoplasm. It catalyses the reaction tRNA(Ala) + L-alanine + ATP = L-alanyl-tRNA(Ala) + AMP + diphosphate. Its function is as follows. Catalyzes the attachment of alanine to tRNA(Ala) in a two-step reaction: alanine is first activated by ATP to form Ala-AMP and then transferred to the acceptor end of tRNA(Ala). Also edits incorrectly charged Ser-tRNA(Ala) and Gly-tRNA(Ala) via its editing domain. The protein is Alanine--tRNA ligase of Escherichia coli O6:K15:H31 (strain 536 / UPEC).